The sequence spans 408 residues: Glyceraldehyde-3-phosphate dehydrogenase, testis-specific (408 aa).

The tract at residues 1-73 is testis-specific N-terminal extension; the sequence is MSKRDIVLTN…TPPPKMVSVA (73 aa). A disordered region spans residues 19–68; that stretch reads QPCPVTRAPPPPEPKAEVEPQPQPEPTPVREEIKPPPPPLPPHPATPPPK. Pro residues predominate over residues 53–68; the sequence is PPPPPLPPHPATPPPK. NAD(+) is bound by residues 85–86, Asp-106, Lys-151, Tyr-173, and Ser-193; that span reads RI. D-glyceraldehyde 3-phosphate is bound by residues 223 to 225, Thr-254, 283 to 284, and Arg-306; these read SCT and TG. The active-site Nucleophile is Cys-224. Residue Asn-388 coordinates NAD(+).

It belongs to the glyceraldehyde-3-phosphate dehydrogenase family. Homotetramer. Interacts with ARRB2; the interaction is detected in the nucleus upon OR1D2 stimulation. As to expression, testis specific.

It is found in the cytoplasm. It carries out the reaction D-glyceraldehyde 3-phosphate + phosphate + NAD(+) = (2R)-3-phospho-glyceroyl phosphate + NADH + H(+). Its pathway is carbohydrate degradation; glycolysis; pyruvate from D-glyceraldehyde 3-phosphate: step 1/5. May play an important role in regulating the switch between different pathways for energy production during spermiogenesis and in the spermatozoon. Required for sperm motility and male fertility. The protein is Glyceraldehyde-3-phosphate dehydrogenase, testis-specific (GAPDHS) of Homo sapiens (Human).